A 215-amino-acid polypeptide reads, in one-letter code: S-crystallin 4 (215 aa).

Residues 2–80 form the GST N-terminal domain; that stretch reads PSYTLHYFNH…YLAREFGFHG (79 aa). The region spanning 82–215 is the GST C-terminal domain; the sequence is NNMDMARVDY…YLQKRSRTEF (134 aa).

The protein belongs to the GST superfamily. As to expression, lens.

Functionally, S-crystallins are structural components of squids and octopi eye lens. Contains relatively little if any GST activity. In Enteroctopus dofleini (North Pacific giant octopus), this protein is S-crystallin 4.